Reading from the N-terminus, the 95-residue chain is Small ribosomal subunit protein bS6 (95 aa).

The protein belongs to the bacterial ribosomal protein bS6 family.

In terms of biological role, binds together with bS18 to 16S ribosomal RNA. The chain is Small ribosomal subunit protein bS6 from Nocardia farcinica (strain IFM 10152).